We begin with the raw amino-acid sequence, 175 residues long: Large ribosomal subunit protein uL10 (175 aa).

The protein belongs to the universal ribosomal protein uL10 family. As to quaternary structure, part of the ribosomal stalk of the 50S ribosomal subunit. The N-terminus interacts with L11 and the large rRNA to form the base of the stalk. The C-terminus forms an elongated spine to which L12 dimers bind in a sequential fashion forming a multimeric L10(L12)X complex.

Functionally, forms part of the ribosomal stalk, playing a central role in the interaction of the ribosome with GTP-bound translation factors. In Xylella fastidiosa (strain M23), this protein is Large ribosomal subunit protein uL10.